The sequence spans 423 residues: Protein CLP1 homolog (423 aa).

Residues Glu-16, Lys-57, and 119 to 124 (DVGKST) contribute to the ATP site.

Belongs to the Clp1 family. Clp1 subfamily.

It localises to the nucleus. Its function is as follows. Required for endonucleolytic cleavage during polyadenylation-dependent pre-mRNA 3'-end formation. In Drosophila melanogaster (Fruit fly), this protein is Protein CLP1 homolog (cbc).